The sequence spans 588 residues: Putative pentatricopeptide repeat-containing protein At5g52630 (588 aa).

11 PPR repeats span residues 14–48 (NYNQICDLLLSSARTRSTIKGLQLHGYVVKSGLSL), 49–79 (IPLVANNLINFYSKSQLPFDSRRAFEDSPQK), 80–114 (SSTTWSSIISCFAQNELPWMSLEFLKKMMAGNLRP), 115–149 (DDHVLPSATKSCAILSRCDIGRSVHCLSMKTGYDA), 150–180 (DVFVGSSLVDMYAKCGEIVYARKMFDEMPQR), 181–215 (NVVTWSGMMYGYAQMGENEEALWLFKEALFENLAV), 216–250 (NDYSFSSVISVCANSTLLELGRQIHGLSIKSSFDS), 251–281 (SSFVGSSLVSLYSKCGVPEGAYQVFNEVPVK), 282–316 (NLGIWNAMLKAYAQHSHTQKVIELFKRMKLSGMKP), 317–351 (NFITFLNVLNACSHAGLVDEGRYYFDQMKESRIEP), and 352–386 (TDKHYASLVDMLGRAGRLQEALEVITNMPIDPTES). Positions 387 to 462 (VWGALLTSCT…ETGLSWVEER (76 aa)) are type E motif. Positions 463–493 (NKVHTFAAGERRHEKSKEIYEKLAELGEEME) are type E(+) motif. The type DYW motif stretch occupies residues 494-588 (KAGYIADTSY…DGKCSCNDYW (95 aa)).

This sequence belongs to the PPR family. PCMP-H subfamily.

This is Putative pentatricopeptide repeat-containing protein At5g52630 (PCMP-H52) from Arabidopsis thaliana (Mouse-ear cress).